We begin with the raw amino-acid sequence, 266 residues long: Large ribosomal subunit protein eL8 (266 aa).

Residues 1–11 (MPKGKKAKGKK) are compositionally biased toward basic residues. Residues 1 to 21 (MPKGKKAKGKKVAPAPSVAKK) are disordered.

The protein belongs to the eukaryotic ribosomal protein eL8 family. As to quaternary structure, component of the large ribosomal subunit.

It is found in the cytoplasm. Its function is as follows. Component of the large ribosomal subunit. The ribosome is a large ribonucleoprotein complex responsible for the synthesis of proteins in the cell. The protein is Large ribosomal subunit protein eL8 (rpl7a) of Ictalurus punctatus (Channel catfish).